We begin with the raw amino-acid sequence, 87 residues long: UPF0335 protein Meso_3367 (87 aa).

It belongs to the UPF0335 family.

This chain is UPF0335 protein Meso_3367, found in Chelativorans sp. (strain BNC1).